The chain runs to 136 residues: Protein NrdI (136 aa).

The protein belongs to the NrdI family.

Its function is as follows. Probably involved in ribonucleotide reductase function. The polypeptide is Protein NrdI (Enterobacter sp. (strain 638)).